Here is a 440-residue protein sequence, read N- to C-terminus: UDP-N-acetylmuramoylalanine--D-glutamate ligase (440 aa).

112 to 118 (GSNGKST) contributes to the ATP binding site.

The protein belongs to the MurCDEF family.

The protein localises to the cytoplasm. The catalysed reaction is UDP-N-acetyl-alpha-D-muramoyl-L-alanine + D-glutamate + ATP = UDP-N-acetyl-alpha-D-muramoyl-L-alanyl-D-glutamate + ADP + phosphate + H(+). It functions in the pathway cell wall biogenesis; peptidoglycan biosynthesis. Functionally, cell wall formation. Catalyzes the addition of glutamate to the nucleotide precursor UDP-N-acetylmuramoyl-L-alanine (UMA). The sequence is that of UDP-N-acetylmuramoylalanine--D-glutamate ligase from Blochmanniella pennsylvanica (strain BPEN).